We begin with the raw amino-acid sequence, 164 residues long: Peptide methionine sulfoxide reductase MsrA (164 aa).

Cys16 is an active-site residue.

This sequence belongs to the MsrA Met sulfoxide reductase family.

It catalyses the reaction L-methionyl-[protein] + [thioredoxin]-disulfide + H2O = L-methionyl-(S)-S-oxide-[protein] + [thioredoxin]-dithiol. It carries out the reaction [thioredoxin]-disulfide + L-methionine + H2O = L-methionine (S)-S-oxide + [thioredoxin]-dithiol. Has an important function as a repair enzyme for proteins that have been inactivated by oxidation. Catalyzes the reversible oxidation-reduction of methionine sulfoxide in proteins to methionine. This chain is Peptide methionine sulfoxide reductase MsrA, found in Clostridium tetani (strain Massachusetts / E88).